Consider the following 371-residue polypeptide: Dual-specificity RNA methyltransferase RlmN (371 aa).

The active-site Proton acceptor is glutamate 114. The Radical SAM core domain occupies 120-352 (EEDHFTLCVS…VMTRQSKGAD (233 aa)). Cysteines 127 and 357 form a disulfide. [4Fe-4S] cluster-binding residues include cysteine 134, cysteine 138, and cysteine 141. Residues 183-184 (GE), serine 216, 238-240 (SLN), and asparagine 314 contribute to the S-adenosyl-L-methionine site. The active-site S-methylcysteine intermediate is cysteine 357.

It belongs to the radical SAM superfamily. RlmN family. It depends on [4Fe-4S] cluster as a cofactor.

The protein localises to the cytoplasm. It carries out the reaction adenosine(2503) in 23S rRNA + 2 reduced [2Fe-2S]-[ferredoxin] + 2 S-adenosyl-L-methionine = 2-methyladenosine(2503) in 23S rRNA + 5'-deoxyadenosine + L-methionine + 2 oxidized [2Fe-2S]-[ferredoxin] + S-adenosyl-L-homocysteine. It catalyses the reaction adenosine(37) in tRNA + 2 reduced [2Fe-2S]-[ferredoxin] + 2 S-adenosyl-L-methionine = 2-methyladenosine(37) in tRNA + 5'-deoxyadenosine + L-methionine + 2 oxidized [2Fe-2S]-[ferredoxin] + S-adenosyl-L-homocysteine. Specifically methylates position 2 of adenine 2503 in 23S rRNA and position 2 of adenine 37 in tRNAs. m2A2503 modification seems to play a crucial role in the proofreading step occurring at the peptidyl transferase center and thus would serve to optimize ribosomal fidelity. The chain is Dual-specificity RNA methyltransferase RlmN from Desulfosudis oleivorans (strain DSM 6200 / JCM 39069 / Hxd3) (Desulfococcus oleovorans).